A 514-amino-acid chain; its full sequence is Alpha-1B adrenergic receptor (514 aa).

Residues 1–45 are Extracellular-facing; it reads MNPDLDTGHNTSAPAHWGELKDANFTGPNQTSSNSTLPQLDVTRA. N-linked (GlcNAc...) asparagine glycans are attached at residues Asn10, Asn24, Asn29, and Asn34. A helical membrane pass occupies residues 46-69; that stretch reads ISVGCLGAFILFAIVGNILVILSV. At 70-82 the chain is on the cytoplasmic side; that stretch reads ACNRHLRTPTNYF. The chain crosses the membrane as a helical span at residues 83–104; that stretch reads IVNLAIADLLLSFTDLPFSATL. The Extracellular portion of the chain corresponds to 105–114; sequence EVLGYWVLGR. A helical membrane pass occupies residues 115–140; it reads IFCDIWAAVDVLCCTASILSLCAISI. Cys117 and Cys194 form a disulfide bridge. At 141-160 the chain is on the cytoplasmic side; sequence DRYIGVRYSLQYPTLVTRRK. The chain crosses the membrane as a helical span at residues 161 to 183; sequence AILALLSVWVLSTVISIGPLLGW. The Extracellular segment spans residues 184 to 200; the sequence is KEPAPNDDKECGVTEEP. A helical membrane pass occupies residues 201–223; sequence FYALFSSLGSFYIPLAVILVMYC. At 224-294 the chain is on the cytoplasmic side; that stretch reads RVYIVAKRTT…FSREKKAAKT (71 aa). A Phosphothreonine modification is found at Thr263. The helical transmembrane segment at 295 to 318 threads the bilayer; the sequence is LGIVVGMFILCWLPFFIALPLGSL. Over 319–325 the chain is Extracellular; sequence FSTLKPP. The helical transmembrane segment at 326-350 threads the bilayer; the sequence is DAVFKVVFWLGYFNSCLNPIIYPCS. Residues 351 to 514 are Cytoplasmic-facing; sequence SKEFKRAFMR…SNMPLAPGHF (164 aa). The S-palmitoyl cysteine moiety is linked to residue Cys364. The Nuclear localization signal signature appears at 367 to 377; that stretch reads RGGRRRRRRRR. Disordered stretches follow at residues 391 to 429 and 473 to 514; these read GGSL…GYLG and LGEP…PGHF. Residues 409–423 show a composition bias toward polar residues; sequence SCMSGSQRTLPSASP.

This sequence belongs to the G-protein coupled receptor 1 family. Adrenergic receptor subfamily. ADRA1B sub-subfamily. Homo- and heterooligomer. Heterooligomerizes with ADRA1B homooligomers in cardiac myocytes. Interacts with CAVIN4.

The protein localises to the nucleus membrane. It localises to the cell membrane. The protein resides in the cytoplasm. Its subcellular location is the membrane. It is found in the caveola. This alpha-adrenergic receptor mediates its action by association with G proteins that activate a phosphatidylinositol-calcium second messenger system. Its effect is mediated by G(q) and G(11) proteins. Nuclear ADRA1A-ADRA1B heterooligomers regulate phenylephrine (PE)-stimulated ERK signaling in cardiac myocytes. The polypeptide is Alpha-1B adrenergic receptor (Adra1b) (Mus musculus (Mouse)).